Here is a 70-residue protein sequence, read N- to C-terminus: Putative membrane protein insertion efficiency factor (70 aa).

Belongs to the UPF0161 family.

The protein localises to the cell membrane. Its function is as follows. Could be involved in insertion of integral membrane proteins into the membrane. This chain is Putative membrane protein insertion efficiency factor, found in Finegoldia magna (strain ATCC 29328 / DSM 20472 / WAL 2508) (Peptostreptococcus magnus).